The chain runs to 1079 residues: DNA ligase 4 (1079 aa).

The tract at residues 1–20 (MAVHAPYNHAPPPTQEINGQ) is disordered. Residues Glu-295, Lys-297, Leu-298, Arg-302, Glu-357, Phe-395, Glu-460, Lys-465, Lys-482, and Lys-484 each coordinate ATP. Lys-297 acts as the N6-AMP-lysine intermediate in catalysis. Glu-357 is a binding site for Mg(2+). Mg(2+) is bound at residue Glu-460. The BRCT 1 domain maps to 699–789 (VETSIFSDMT…TALPFLKEFL (91 aa)). Over residues 838–847 (DGEDKDEIDV) the composition is skewed to acidic residues. A disordered region spans residues 838–942 (DGEDKDEIDV…SDVGVNGDDY (105 aa)). 2 stretches are compositionally biased toward basic and acidic residues: residues 848 to 878 (EESR…KKLQ) and 900 to 914 (MSLK…ERSR). In terms of domain architecture, BRCT 2 spans 968–1078 (DEDRIFYHLA…TLLDEDLYKP (111 aa)).

Belongs to the ATP-dependent DNA ligase family. Mg(2+) serves as cofactor.

It localises to the nucleus. It catalyses the reaction ATP + (deoxyribonucleotide)n-3'-hydroxyl + 5'-phospho-(deoxyribonucleotide)m = (deoxyribonucleotide)n+m + AMP + diphosphate.. DNA ligase involved in DNA non-homologous end joining (NHEJ); required for double-strand break (DSB) repair. The sequence is that of DNA ligase 4 (LIG4) from Cryptococcus neoformans var. neoformans serotype D (strain JEC21 / ATCC MYA-565) (Filobasidiella neoformans).